We begin with the raw amino-acid sequence, 124 residues long: Small ribosomal subunit protein uS12 (124 aa).

Asp89 bears the 3-methylthioaspartic acid mark.

This sequence belongs to the universal ribosomal protein uS12 family. In terms of assembly, part of the 30S ribosomal subunit. Contacts proteins S8 and S17. May interact with IF1 in the 30S initiation complex.

Functionally, with S4 and S5 plays an important role in translational accuracy. In terms of biological role, interacts with and stabilizes bases of the 16S rRNA that are involved in tRNA selection in the A site and with the mRNA backbone. Located at the interface of the 30S and 50S subunits, it traverses the body of the 30S subunit contacting proteins on the other side and probably holding the rRNA structure together. The combined cluster of proteins S8, S12 and S17 appears to hold together the shoulder and platform of the 30S subunit. In Treponema pallidum subsp. pallidum (strain SS14), this protein is Small ribosomal subunit protein uS12.